The chain runs to 485 residues: CUGBP Elav-like family member 5 (485 aa).

Over residues 1–11 (MARLTESEARR) the composition is skewed to basic and acidic residues. The interval 1–40 (MARLTESEARRQQQQLLQPRPSPVGSSGPEPPGGQPDGMK) is disordered. The span at 12 to 28 (QQQQLLQPRPSPVGSSG) shows a compositional bias: low complexity. RRM domains lie at 45–126 (IKLF…PADS), 134–214 (RKLF…FADT), and 400–478 (CNLF…LKRP).

The protein belongs to the CELF/BRUNOL family. As to expression, expressed in brain.

It localises to the nucleus. It is found in the cytoplasm. Its function is as follows. RNA-binding protein implicated in the regulation of pre-mRNA alternative splicing. Mediates exon inclusion and/or exclusion in pre-mRNA that are subject to tissue-specific and developmentally regulated alternative splicing. Specifically activates exon 5 inclusion of cardiac isoforms of TNNT2 during heart remodeling at the juvenile to adult transition. Binds to muscle-specific splicing enhancer (MSE) intronic sites flanking the alternative exon 5 of TNNT2 pre-mRNA. The protein is CUGBP Elav-like family member 5 (CELF5) of Homo sapiens (Human).